Consider the following 27-residue polypeptide: Ganodermin (27 aa).

In terms of biological role, has antifungal activity against B.cinera, F.oxysporum and P.piricola with IC(50) values of 15.2 uM, 12.4 uM and 18.1 uM, respectively. Lacks hemagglutinating activity towards rabbit erythrocytes. Lacks deoxyribonuclease, ribonuclease and protease inhibitory activities. In Ganoderma lucidum (Ling zhi medicinal fungus), this protein is Ganodermin.